Reading from the N-terminus, the 312-residue chain is Transcription initiation factor IIB-2 (312 aa).

A TFIIB-type zinc finger spans residues 2–34 (SDAFCSDCKRHTEVVFDHSAGDTVCSECGLVLE). The Zn(2+) site is built by Cys6, Cys9, Cys26, and Cys29. Repeat copies occupy residues 115 to 192 (MADR…YIVK) and 216 to 290 (FCSN…DLYP).

This sequence belongs to the TFIIB family. Associates with TFIID-IIA (DA complex) to form TFIID-IIA-IIB (DAB-complex) which is then recognized by polymerase II.

It localises to the nucleus. General factor that plays a major role in the activation of eukaryotic genes transcribed by RNA polymerase II. This is Transcription initiation factor IIB-2 (TFIIB2) from Arabidopsis thaliana (Mouse-ear cress).